Consider the following 344-residue polypeptide: Tryptophan--tRNA ligase (344 aa).

Residues 20–22 (QPS) and 28–29 (GN) contribute to the ATP site. The 'HIGH' region motif lies at 21–29 (PSGALHLGN). Asp144 provides a ligand contact to L-tryptophan. Residues 156-158 (GED), Val197, and 206-210 (KMSKS) each bind ATP. Residues 206 to 210 (KMSKS) carry the 'KMSKS' region motif.

Belongs to the class-I aminoacyl-tRNA synthetase family. Homodimer.

It is found in the cytoplasm. The catalysed reaction is tRNA(Trp) + L-tryptophan + ATP = L-tryptophyl-tRNA(Trp) + AMP + diphosphate + H(+). In terms of biological role, catalyzes the attachment of tryptophan to tRNA(Trp). This chain is Tryptophan--tRNA ligase, found in Caulobacter vibrioides (strain ATCC 19089 / CIP 103742 / CB 15) (Caulobacter crescentus).